The chain runs to 199 residues: 7-methyl-GTP pyrophosphatase (199 aa).

The active-site Proton acceptor is Asp76.

It belongs to the Maf family. YceF subfamily. A divalent metal cation serves as cofactor.

The protein localises to the cytoplasm. It carries out the reaction N(7)-methyl-GTP + H2O = N(7)-methyl-GMP + diphosphate + H(+). Nucleoside triphosphate pyrophosphatase that hydrolyzes 7-methyl-GTP (m(7)GTP). May have a dual role in cell division arrest and in preventing the incorporation of modified nucleotides into cellular nucleic acids. The chain is 7-methyl-GTP pyrophosphatase from Brucella abortus biovar 1 (strain 9-941).